The following is a 354-amino-acid chain: Uroporphyrinogen decarboxylase (354 aa).

Substrate contacts are provided by residues 27 to 31 (RQAGR), F46, D77, Y153, T208, and H326.

The protein belongs to the uroporphyrinogen decarboxylase family. As to quaternary structure, homodimer.

It is found in the cytoplasm. It catalyses the reaction uroporphyrinogen III + 4 H(+) = coproporphyrinogen III + 4 CO2. It functions in the pathway porphyrin-containing compound metabolism; protoporphyrin-IX biosynthesis; coproporphyrinogen-III from 5-aminolevulinate: step 4/4. Functionally, catalyzes the decarboxylation of four acetate groups of uroporphyrinogen-III to yield coproporphyrinogen-III. This is Uroporphyrinogen decarboxylase from Neisseria meningitidis serogroup B (strain ATCC BAA-335 / MC58).